A 119-amino-acid polypeptide reads, in one-letter code: uncharacterized protein (119 aa).

Residues 6–36 (QAYLDIQGKIAEFRREIKALRVEEKAITANL) adopt a coiled-coil conformation. The segment at 95–119 (AVTGSSSNVKIRKSAPARNEEDDDG) is disordered.

This is an uncharacterized protein from Frog virus 3 (isolate Goorha) (FV-3).